The primary structure comprises 741 residues: Catalase-peroxidase 2 (741 aa).

Residues 1 to 28 form the signal peptide; sequence MQKKRVGKSVVAALAIIAMSAGTVAAWA. A cross-link (tryptophyl-tyrosyl-methioninium (Trp-Tyr) (with M-254)) is located at residues 107–228; it reads WHGAGTYRTY…LAATQMGLIY (122 aa). Catalysis depends on His-108, which acts as the Proton acceptor. Positions 228–254 form a cross-link, tryptophyl-tyrosyl-methioninium (Tyr-Met) (with W-107); that stretch reads YVNPEGPNGNPDPVAAAKDIRDAFGRM. His-269 is a binding site for heme b.

It belongs to the peroxidase family. Peroxidase/catalase subfamily. As to quaternary structure, homodimer or homotetramer. Heme b serves as cofactor. In terms of processing, formation of the three residue Trp-Tyr-Met cross-link is important for the catalase, but not the peroxidase activity of the enzyme.

The catalysed reaction is H2O2 + AH2 = A + 2 H2O. The enzyme catalyses 2 H2O2 = O2 + 2 H2O. In terms of biological role, bifunctional enzyme with both catalase and broad-spectrum peroxidase activity. This is Catalase-peroxidase 2 from Burkholderia ambifaria (strain ATCC BAA-244 / DSM 16087 / CCUG 44356 / LMG 19182 / AMMD) (Burkholderia cepacia (strain AMMD)).